We begin with the raw amino-acid sequence, 304 residues long: Uricase (304 aa).

Ala-2 carries the N-acetylalanine modification. Residues Lys-10 and Lys-23 each carry the N6-acetyllysine; alternate modification. N6-succinyllysine; alternate is present on residues Lys-10 and Lys-23. Lys-23 (charge relay system) is an active-site residue. Residues Lys-27 and Lys-36 each carry the N6-acetyllysine modification. Ser-39 and Ser-63 each carry phosphoserine. The Charge relay system role is filled by Thr-68. Thr-68 and Asp-69 together coordinate urate. An N6-acetyllysine mark is found at Lys-118, Lys-122, and Lys-164. Phe-170 is a binding site for urate. An N6-acetyllysine mark is found at Lys-175 and Lys-185. Urate is bound at residue Arg-187. Lys-221 and Lys-228 each carry N6-acetyllysine; alternate. Residues Lys-221 and Lys-228 each carry the N6-succinyllysine; alternate modification. Ser-232 is modified (phosphoserine). Val-235, Gln-236, and Asn-262 together coordinate urate. Residue His-264 is the Charge relay system of the active site. Lys-278 carries the N6-acetyllysine modification. Residue Tyr-289 is modified to Phosphotyrosine. A Microbody targeting signal motif is present at residues 302-304; that stretch reads SRL.

The protein belongs to the uricase family. As to quaternary structure, homotetramer.

Its subcellular location is the peroxisome. It catalyses the reaction urate + O2 + H2O = 5-hydroxyisourate + H2O2. It participates in purine metabolism; urate degradation; (S)-allantoin from urate: step 1/3. In terms of biological role, catalyzes the oxidation of uric acid to 5-hydroxyisourate, which is further processed to form (S)-allantoin. This chain is Uricase (UOX), found in Bos taurus (Bovine).